We begin with the raw amino-acid sequence, 346 residues long: Probable dual-specificity RNA methyltransferase RlmN (346 aa).

The Proton acceptor role is filled by E92. The region spanning 98–332 (TDQRLTVCVS…VSLRASRGLD (235 aa)) is the Radical SAM core domain. C105 and C337 are disulfide-bonded. Residues C112, C116, and C119 each coordinate [4Fe-4S] cluster. S-adenosyl-L-methionine contacts are provided by residues 159-160 (GE), S189, 218-220 (SLH), and N294. C337 serves as the catalytic S-methylcysteine intermediate.

It belongs to the radical SAM superfamily. RlmN family. [4Fe-4S] cluster serves as cofactor.

Its subcellular location is the cytoplasm. The catalysed reaction is adenosine(2503) in 23S rRNA + 2 reduced [2Fe-2S]-[ferredoxin] + 2 S-adenosyl-L-methionine = 2-methyladenosine(2503) in 23S rRNA + 5'-deoxyadenosine + L-methionine + 2 oxidized [2Fe-2S]-[ferredoxin] + S-adenosyl-L-homocysteine. It catalyses the reaction adenosine(37) in tRNA + 2 reduced [2Fe-2S]-[ferredoxin] + 2 S-adenosyl-L-methionine = 2-methyladenosine(37) in tRNA + 5'-deoxyadenosine + L-methionine + 2 oxidized [2Fe-2S]-[ferredoxin] + S-adenosyl-L-homocysteine. Specifically methylates position 2 of adenine 2503 in 23S rRNA and position 2 of adenine 37 in tRNAs. The protein is Probable dual-specificity RNA methyltransferase RlmN of Synechococcus sp. (strain CC9311).